A 156-amino-acid chain; its full sequence is Transcription elongation factor GreA (156 aa).

Residues 1–32 (MKKVRLTREGYEKLKQELEELKRKFMYEISER) are a coiled coil.

This sequence belongs to the GreA/GreB family.

Its function is as follows. Necessary for efficient RNA polymerase transcription elongation past template-encoded arresting sites. The arresting sites in DNA have the property of trapping a certain fraction of elongating RNA polymerases that pass through, resulting in locked ternary complexes. Cleavage of the nascent transcript by cleavage factors such as GreA or GreB allows the resumption of elongation from the new 3'terminus. GreA releases sequences of 2 to 3 nucleotides. The chain is Transcription elongation factor GreA from Thermotoga neapolitana (strain ATCC 49049 / DSM 4359 / NBRC 107923 / NS-E).